A 192-amino-acid polypeptide reads, in one-letter code: MLITISGPAGSGKSTVAAGLAESLGYEHVSGGDIFRDLADDRGLTPLELNKRAEEDDQIDRDLDRKQRDIAESRDDIVLESRLAGWMAGEHADFRIWLDAPLSVRAERIADREDKSVELAHNETKERGKSEALRYREYYNIDIEDRSIYDLALNTARLSPDGVRAVVESAVNAYAPDDDEGQTPVEGVTYEF.

7 to 15 (GPAGSGKST) serves as a coordination point for ATP.

It belongs to the cytidylate kinase family. Type 2 subfamily.

It is found in the cytoplasm. The catalysed reaction is CMP + ATP = CDP + ADP. It carries out the reaction dCMP + ATP = dCDP + ADP. The chain is Cytidylate kinase from Natronomonas pharaonis (strain ATCC 35678 / DSM 2160 / CIP 103997 / JCM 8858 / NBRC 14720 / NCIMB 2260 / Gabara) (Halobacterium pharaonis).